A 429-amino-acid chain; its full sequence is MNHSRSHALFAQAQTVLPGGVNSPVRAFKSVGGEPFFVARADGSYLFDVDGNRYIDYVGSWGPMIAGHNHPAVREAVERAIRDGLSFGAPCAAEVTMAETITGLVPSCEMVRMVNSGTEATLSAVRLARGATGRNRIIKFEGCYHGHGDSFLVKAGSGMLTLGVPTSPGVPAGLSELTATLSFNDFEGATALFDEIGPEVAAVIIEPVVGNANCIPPQAGYLQHLRTLCTRHGALLIFDEVMTGFRVALGGAQAHYGVTPDLSTFGKIIGGGMPVGAYGGRRDLMEQIAPAGPIYQAGTLSGNPVAMAAGLAMLELVQEPGFHMRLSEATSTLCEGLKDAARAAGIAVTTNQVGGMFGLFFTDDIVESYAQATACDITSFNRFFHAMLQRGVYLAPSAYEAGFMSSAHDATVIEATLAAARDAFADVAR.

Lysine 267 is modified (N6-(pyridoxal phosphate)lysine).

Belongs to the class-III pyridoxal-phosphate-dependent aminotransferase family. HemL subfamily. As to quaternary structure, homodimer. Pyridoxal 5'-phosphate is required as a cofactor.

It is found in the cytoplasm. It carries out the reaction (S)-4-amino-5-oxopentanoate = 5-aminolevulinate. It functions in the pathway porphyrin-containing compound metabolism; protoporphyrin-IX biosynthesis; 5-aminolevulinate from L-glutamyl-tRNA(Glu): step 2/2. The sequence is that of Glutamate-1-semialdehyde 2,1-aminomutase from Xanthomonas oryzae pv. oryzae (strain PXO99A).